We begin with the raw amino-acid sequence, 474 residues long: Serine/threonine-protein kinase VRK3 (474 aa).

The segment covering 41 to 58 (HVSSFQGSKRGLNSSFET) has biased composition (polar residues). Residues 41–152 (HVSSFQGSKR…SRVTTSLEAL (112 aa)) form a disordered region. The Nuclear localization signal motif lies at 49 to 64 (KRGLNSSFETSPKKVK). Residues Ser54, Ser55, Ser59, Ser82, Ser83, and Ser90 each carry the phosphoserine modification. Positions 88 to 101 (TLSSSERSKGSGSR) are enriched in low complexity. The span at 107–149 (SSPQKTRKSPQVTRGSPQKTSCSPQKTRQSPQTLKRSRVTTSL) shows a compositional bias: polar residues. Phosphoserine; by CDK5 is present on Ser108. Residues Ser115 and Ser122 each carry the phosphoserine modification. The region spanning 166–457 (WKLKSFQTRD…MLRNNLEALL (292 aa)) is the Protein kinase domain.

The protein belongs to the protein kinase superfamily. CK1 Ser/Thr protein kinase family. VRK subfamily. Interacts with DUSP3. Interacts with RAN. Interacts with HSP70/HSPA1A. In terms of processing, phosphorylated at Ser-108 by CDK5; leading to protection of the cell against H2O2-induced apoptosis. Post-translationally, ubiquitinated by RNF144A.

It localises to the nucleus. It is found in the cytoplasm. It carries out the reaction L-seryl-[protein] + ATP = O-phospho-L-seryl-[protein] + ADP + H(+). Plays a role in the regulation of the cell cycle by phosphorylating the nuclear envelope protein barrier-to-autointegration factor/BAF that is required for disassembly and reassembly, respectively, of the nuclear envelope during mitosis. Under normal physiological conditions, negatively regulates ERK activity along with VHR/DUSP3 phosphatase in the nucleus, causing timely and transient action of ERK. Stress conditions activate CDK5 which phosphorylates VRK3 to increase VHR phosphatase activity and suppress prolonged ERK activation that causes cell death. For example, upon glutamate induction, promotes nuclear localization of HSP70/HSPA1A to inhibit ERK activation via VHR/DUSP3 phosphatase. In Homo sapiens (Human), this protein is Serine/threonine-protein kinase VRK3 (VRK3).